The chain runs to 463 residues: Peptidase inhibitor 16 (463 aa).

The first 27 residues, 1-27 (MHGSCSFLMLLLPLLLLLVATTGPVGA), serve as a signal peptide directing secretion. The SCP domain maps to 37 to 165 (VELHNLYRAQ…TNIELLVCNY (129 aa)). An N-linked (GlcNAc...) asparagine glycan is attached at Asn114. Disordered stretches follow at residues 262–281 (TQAP…TEAP), 303–341 (EPVT…DPKM), and 383–408 (LQAT…SATA). Positions 318-327 (SADKVTDKTK) are enriched in basic and acidic residues. Residues 386–395 (TLDHTGHTSS) form an O-glycosylated at one site region. Over residues 392-408 (HTSSKSLPNFPNTSATA) the composition is skewed to polar residues. Residues Asn403 and Asn409 are each glycosylated (N-linked (GlcNAc...) asparagine).

It belongs to the CRISP family. In terms of assembly, interacts with PSP94/MSMB. In terms of processing, N- and O-glycosylated. O-glycosylated with core 1 or possibly core 8 glycans. Expressed in prostate, testis, ovary and intestine. Concentrates in prostate cancer patient's sera.

It localises to the secreted. Its function is as follows. May inhibit cardiomyocyte growth. The protein is Peptidase inhibitor 16 (PI16) of Homo sapiens (Human).